The chain runs to 338 residues: Fructose-1,6-bisphosphatase class 1 (338 aa).

Mg(2+) is bound by residues Glu91, Asp113, Leu115, and Asp116. Residues 116 to 119 (DGSS), Asn208, and Lys274 each bind substrate. Mg(2+) is bound at residue Glu280.

This sequence belongs to the FBPase class 1 family. Homotetramer. Mg(2+) is required as a cofactor.

The protein resides in the cytoplasm. It carries out the reaction beta-D-fructose 1,6-bisphosphate + H2O = beta-D-fructose 6-phosphate + phosphate. Its pathway is carbohydrate biosynthesis; gluconeogenesis. The sequence is that of Fructose-1,6-bisphosphatase class 1 from Ralstonia pickettii (strain 12J).